We begin with the raw amino-acid sequence, 622 residues long: 1,4-alpha-glucan branching enzyme GlgB (622 aa).

The Nucleophile role is filled by Asp-300. The active-site Proton donor is Glu-351.

Belongs to the glycosyl hydrolase 13 family. GlgB subfamily. As to quaternary structure, monomer.

The enzyme catalyses Transfers a segment of a (1-&gt;4)-alpha-D-glucan chain to a primary hydroxy group in a similar glucan chain.. It functions in the pathway glycan biosynthesis; glycogen biosynthesis. In terms of biological role, catalyzes the formation of the alpha-1,6-glucosidic linkages in glycogen by scission of a 1,4-alpha-linked oligosaccharide from growing alpha-1,4-glucan chains and the subsequent attachment of the oligosaccharide to the alpha-1,6 position. The polypeptide is 1,4-alpha-glucan branching enzyme GlgB (Streptococcus agalactiae serotype III (strain NEM316)).